A 167-amino-acid polypeptide reads, in one-letter code: UPF0587 protein F46B6.12 (167 aa).

Zn(2+)-binding residues include Cys-34, Cys-37, Cys-68, and Cys-71.

The protein belongs to the UPF0587 family.

The polypeptide is UPF0587 protein F46B6.12 (Caenorhabditis elegans).